Consider the following 249-residue polypeptide: Probable transcriptional regulatory protein A1S_1496 (249 aa).

This sequence belongs to the TACO1 family.

It is found in the cytoplasm. In Acinetobacter baumannii (strain ATCC 17978 / DSM 105126 / CIP 53.77 / LMG 1025 / NCDC KC755 / 5377), this protein is Probable transcriptional regulatory protein A1S_1496.